The chain runs to 101 residues: Chaperone modulatory protein CbpM (101 aa).

Belongs to the CbpM family.

Its function is as follows. Interacts with CbpA and inhibits both the DnaJ-like co-chaperone activity and the DNA binding activity of CbpA. Together with CbpA, modulates the activity of the DnaK chaperone system. Does not inhibit the co-chaperone activity of DnaJ. The polypeptide is Chaperone modulatory protein CbpM (Pseudomonas putida (strain W619)).